Here is a 362-residue protein sequence, read N- to C-terminus: Chorismate synthase (362 aa).

2 residues coordinate NADP(+): R48 and R54. FMN is bound by residues 125–127 (RSS), 238–239 (NA), G278, 293–297 (KPTSS), and R319.

It belongs to the chorismate synthase family. In terms of assembly, homotetramer. The cofactor is FMNH2.

It catalyses the reaction 5-O-(1-carboxyvinyl)-3-phosphoshikimate = chorismate + phosphate. Its pathway is metabolic intermediate biosynthesis; chorismate biosynthesis; chorismate from D-erythrose 4-phosphate and phosphoenolpyruvate: step 7/7. Catalyzes the anti-1,4-elimination of the C-3 phosphate and the C-6 proR hydrogen from 5-enolpyruvylshikimate-3-phosphate (EPSP) to yield chorismate, which is the branch point compound that serves as the starting substrate for the three terminal pathways of aromatic amino acid biosynthesis. This reaction introduces a second double bond into the aromatic ring system. This is Chorismate synthase from Psychromonas ingrahamii (strain DSM 17664 / CCUG 51855 / 37).